The sequence spans 294 residues: Oligopeptide transport system permease protein OppC (294 aa).

The next 6 membrane-spanning stretches (helical) occupy residues 27-47 (MISTIFLVAVFLIVYIYSMFL), 94-114 (IAFAVTLITLVVGNILGVITG), 127-147 (FTDFVMILPSMMIIIVFVTII), 151-171 (NSWSLIGIISIFSWIGTTRLI), 202-224 (IWPNLSTLVIAEATLVFAGNIGL), and 260-280 (WTWVPATVVILIVVLAIIFIG). The ABC transmembrane type-1 domain occupies 88–280 (ARNSFNIAFA…IVVLAIIFIG (193 aa)).

It belongs to the binding-protein-dependent transport system permease family. OppBC subfamily. The complex is composed of two ATP-binding proteins (OppD and OppF), two transmembrane proteins (OppB and OppC) and a solute-binding protein (OppA).

It localises to the cell membrane. Part of the ABC transporter complex OppABCDF involved in the uptake of oligopeptides. Probably responsible for the translocation of the substrate across the membrane. In Lactococcus lactis subsp. cremoris (strain SK11), this protein is Oligopeptide transport system permease protein OppC.